The primary structure comprises 1777 residues: FERM and PDZ domain-containing protein 3 (1777 aa).

The PDZ domain occupies 21–98; it reads QVTVHRDPIY…FIVLTVLHTH (78 aa). The FERM domain occupies 147–461; sequence NVLKVFLENG…GYCRLLLDSR (315 aa). 7 disordered regions span residues 491–520, 555–574, 622–697, 832–871, 1014–1216, 1309–1346, and 1732–1765; these read TGGH…TPPP, ETRP…QGYE, QLGP…GRHL, SLGR…QGER, SAPE…PFRL, RPQA…LSSP, and QQQQ…ATVM. Residues 502 to 511 show a composition bias toward polar residues; sequence YVGSVGTSPR. Positions 555-564 are enriched in basic and acidic residues; sequence ETRPRTKSDP. Over residues 649-659 the composition is skewed to acidic residues; it reads SEEEEEEEDET. Polar residues-rich tracts occupy residues 840–850, 1015–1035, 1046–1056, and 1094–1111; these read PSLQPIATGQS, APET…SSPR, HLSQQEDSLPV, and LQKQ…QLES. Residues 1134–1168 are compositionally biased toward low complexity; that stretch reads QSPSCQSRSHSPSCQPHGHSPSSQSRGQSPSCQPR. Residues 1172–1202 show a composition bias toward polar residues; it reads PLRSQAASRQVSTMPSRKLETTLNGAHSTSE. Residues 1732–1751 show a composition bias toward low complexity; that stretch reads QQQQQQQQQQQQVAAAAGAA.

The chain is FERM and PDZ domain-containing protein 3 from Homo sapiens (Human).